Reading from the N-terminus, the 117-residue chain is Large ribosomal subunit protein uL24 (117 aa).

It belongs to the universal ribosomal protein uL24 family. As to quaternary structure, part of the 50S ribosomal subunit.

One of two assembly initiator proteins, it binds directly to the 5'-end of the 23S rRNA, where it nucleates assembly of the 50S subunit. In terms of biological role, one of the proteins that surrounds the polypeptide exit tunnel on the outside of the subunit. In Trichormus variabilis (strain ATCC 29413 / PCC 7937) (Anabaena variabilis), this protein is Large ribosomal subunit protein uL24.